A 311-amino-acid polypeptide reads, in one-letter code: Mitoferrin (311 aa).

Solcar repeat units lie at residues 15–102 (HSIP…MKSF), 111–195 (EHTL…WQQV), and 202–302 (YDPK…FKFM). Transmembrane regions (helical) follow at residues 17-36 (IPVH…CVMF), 77-96 (GVNA…FTVY), 112-132 (HTLA…AVMN), 170-189 (SYTT…FMGY), 204-223 (PKSH…AVTT), and 277-296 (GLQA…WSVY).

The protein belongs to the mitochondrial carrier (TC 2.A.29) family.

It localises to the mitochondrion inner membrane. Functionally, mitochondrial iron transporter that mediates iron uptake. Probably required for heme synthesis of hemoproteins and Fe-S cluster assembly. The polypeptide is Mitoferrin (Caenorhabditis briggsae).